The chain runs to 473 residues: Cysteine--tRNA ligase (473 aa).

Cys-28 lines the Zn(2+) pocket. Positions 30–40 (MTVYDFCHIGH) match the 'HIGH' region motif. 3 residues coordinate Zn(2+): Cys-212, His-237, and Glu-241. A 'KMSKS' region motif is present at residues 277-281 (KMSKS). Lys-280 is a binding site for ATP.

The protein belongs to the class-I aminoacyl-tRNA synthetase family. Monomer. Zn(2+) serves as cofactor.

The protein resides in the cytoplasm. The enzyme catalyses tRNA(Cys) + L-cysteine + ATP = L-cysteinyl-tRNA(Cys) + AMP + diphosphate. The chain is Cysteine--tRNA ligase from Polynucleobacter asymbioticus (strain DSM 18221 / CIP 109841 / QLW-P1DMWA-1) (Polynucleobacter necessarius subsp. asymbioticus).